A 46-amino-acid chain; its full sequence is Myoregulin (46 aa).

The Cytoplasmic portion of the chain corresponds to 1 to 21 (MSGKSWVLISTTSPQSLEDEI). The chain crosses the membrane as a helical span at residues 22 to 42 (LGRLLKILFVLFVDLMSIMYV). Residues 43-46 (VITS) lie on the Lumenal side of the membrane.

Homooligomer. Monomer. Interacts with ATP2A1/SERCA1. Interacts as a monomer with ATP2A2/SERCA2; the interaction inhibits ATP2A2 activity. Specifically expressed in all skeletal muscles. Detected in both fast- and slow-type skeletal muscle. Not expressed in cardiac or smooth muscles.

The protein localises to the sarcoplasmic reticulum membrane. In terms of biological role, inhibits the activity of ATP2A1/SERCA1 ATPase in sarcoplasmic reticulum by decreasing the apparent affinity of the ATPase for Ca(2+), thereby acting as a key regulator of skeletal muscle activity. Its high expression in adult skeletal muscle, suggests that it constitutes the predominant regulator of ATP2A1/SERCA1 in adult skeletal muscle. Also inhibits the activity of ATP2A2/SERCA2 and ATP2A3/SERCA3. The polypeptide is Myoregulin (Mus musculus (Mouse)).